The chain runs to 375 residues: Carbamoyl phosphate synthase small chain (375 aa).

Residues 1–186 form a CPSase region; that stretch reads MRALLALEDG…LEPGGCAWVG (186 aa). L-glutamine is bound by residues Ser-45, Gly-238, and Gly-240. Residues 190 to 375 form the Glutamine amidotransferase type-1 domain; the sequence is RLVVYDFGIK…RNMVREAAGC (186 aa). Cys-265 acts as the Nucleophile in catalysis. 5 residues coordinate L-glutamine: Leu-266, Gln-269, Asn-307, Gly-309, and Phe-310. Residues His-348 and Glu-350 contribute to the active site.

Belongs to the CarA family. As to quaternary structure, composed of two chains; the small (or glutamine) chain promotes the hydrolysis of glutamine to ammonia, which is used by the large (or ammonia) chain to synthesize carbamoyl phosphate. Tetramer of heterodimers (alpha,beta)4.

It catalyses the reaction hydrogencarbonate + L-glutamine + 2 ATP + H2O = carbamoyl phosphate + L-glutamate + 2 ADP + phosphate + 2 H(+). The catalysed reaction is L-glutamine + H2O = L-glutamate + NH4(+). It participates in amino-acid biosynthesis; L-arginine biosynthesis; carbamoyl phosphate from bicarbonate: step 1/1. The protein operates within pyrimidine metabolism; UMP biosynthesis via de novo pathway; (S)-dihydroorotate from bicarbonate: step 1/3. Its function is as follows. Small subunit of the glutamine-dependent carbamoyl phosphate synthetase (CPSase). CPSase catalyzes the formation of carbamoyl phosphate from the ammonia moiety of glutamine, carbonate, and phosphate donated by ATP, constituting the first step of 2 biosynthetic pathways, one leading to arginine and/or urea and the other to pyrimidine nucleotides. The small subunit (glutamine amidotransferase) binds and cleaves glutamine to supply the large subunit with the substrate ammonia. This chain is Carbamoyl phosphate synthase small chain, found in Nitratidesulfovibrio vulgaris (strain ATCC 29579 / DSM 644 / CCUG 34227 / NCIMB 8303 / VKM B-1760 / Hildenborough) (Desulfovibrio vulgaris).